Reading from the N-terminus, the 324-residue chain is Ribosomal RNA small subunit methyltransferase H (324 aa).

S-adenosyl-L-methionine-binding positions include 40-42 (AGH), aspartate 60, leucine 94, aspartate 108, and histidine 115. The tract at residues 301-324 (EEMKVNTRSRSAKLRVAERTGEDG) is disordered. The span at 315–324 (RVAERTGEDG) shows a compositional bias: basic and acidic residues.

Belongs to the methyltransferase superfamily. RsmH family.

It localises to the cytoplasm. The catalysed reaction is cytidine(1402) in 16S rRNA + S-adenosyl-L-methionine = N(4)-methylcytidine(1402) in 16S rRNA + S-adenosyl-L-homocysteine + H(+). Specifically methylates the N4 position of cytidine in position 1402 (C1402) of 16S rRNA. The polypeptide is Ribosomal RNA small subunit methyltransferase H (Maridesulfovibrio salexigens (strain ATCC 14822 / DSM 2638 / NCIMB 8403 / VKM B-1763) (Desulfovibrio salexigens)).